The chain runs to 177 residues: Probetacellulin (177 aa).

Residues 1–31 (MDPTAPGSSVSSLPLLLVLALGLAILHCVVA) form the signal peptide. At 32–118 (DGNTTRTPET…LFYLQQDRGQ (87 aa)) the chain is on the extracellular side. 3 N-linked (GlcNAc...) asparagine glycosylation sites follow: Asn-34, Asn-42, and Asn-52. In terms of domain architecture, EGF-like spans 65 to 105 (HFSRCPKQYKHYCIHGRCRFVVDEQTPSCICEKGYFGARCE). Cystine bridges form between Cys-69–Cys-82, Cys-77–Cys-93, and Cys-95–Cys-104. The propeptide at 112–177 (LQQDRGQILV…SEDIQETNIA (66 aa)) is removed in mature form. Residues 119 to 139 (ILVVCLIVVMVVFIILVIGVC) form a helical membrane-spanning segment. Over 140-177 (TCCHPLRKHRKKKKEEKMETLDKDKTPISEDIQETNIA) the chain is Cytoplasmic. The segment at 153–177 (KEEKMETLDKDKTPISEDIQETNIA) is disordered. Residues 154-167 (EEKMETLDKDKTPI) are compositionally biased toward basic and acidic residues.

In terms of assembly, monomer. Interacts with EGFR and ERBB4. As to expression, found in several mouse tissues including kidney, uterus and liver, as well as in beta tumor cell line and MCF-7 cells. It is not detected in the brain.

The protein localises to the secreted. Its subcellular location is the extracellular space. The protein resides in the cell membrane. In terms of biological role, growth factor that binds to EGFR, ERBB4 and other EGF receptor family members. Potent mitogen for retinal pigment epithelial cells and vascular smooth muscle cells. This Mus musculus (Mouse) protein is Probetacellulin (Btc).